The sequence spans 451 residues: Lysine histidine transporter-like 3 (451 aa).

Topologically, residues 1–40 (MKGIPSSSNQILNQDLVEDQSFELEDWLPITASRNANWYY) are cytoplasmic. The helical transmembrane segment at 41-61 (SAFHNVTAIVGAGVLGLPYAM) threads the bilayer. Over 62 to 63 (SE) the chain is Extracellular. A helical membrane pass occupies residues 64 to 84 (LGWGPGVVVLILSWVITLYTF). Residues 85–115 (WQMIEMHEMFEGKRFDRYHELGQAAFGKKLG) lie on the Cytoplasmic side of the membrane. The chain crosses the membrane as a helical span at residues 116 to 136 (LYIVVPLQLLVETSACIVYMV). The Extracellular segment spans residues 137 to 159 (TGGESLKKIHQLSVGDYECRKLK). The chain crosses the membrane as a helical span at residues 160-177 (VRHFILIFASSQFVLSLL). At 178-182 (KNFNS) the chain is on the cytoplasmic side. Residues 183–203 (ISGVSLVAAVMSMSYSTIAWV) traverse the membrane as a helical segment. The Extracellular segment spans residues 204–227 (ASLTKGVANNVEYGYKRRNNTSVP). The chain crosses the membrane as a helical span at residues 228-248 (LAFLGALGEMAFAYAGHNVVL). The Cytoplasmic portion of the chain corresponds to 249–269 (EIQATIPSTPENPSKRPMWKG). The helical transmembrane segment at 270–290 (AIVAYIIVAFCYFPVALVGFW) threads the bilayer. Over 291 to 309 (TFGNNVEENILKTLRGPKG) the chain is Extracellular. The helical transmembrane segment at 310 to 330 (LIIVANIFVIIHLMGSYQVYA) threads the bilayer. Residues 331–358 (MPVFDMIESVMIKKWHFSPTRVLRFTIR) are Cytoplasmic-facing. Residues 359 to 379 (WTFVAATMGIAVALPHFSALL) traverse the membrane as a helical segment. A topological domain (extracellular) is located at residue S380. The chain crosses the membrane as a helical span at residues 381–401 (FFGGFIFAPTTYFIPCIIWLI). Residues 402-413 (LKKPKRFSLSWC) lie on the Cytoplasmic side of the membrane. The chain crosses the membrane as a helical span at residues 414–434 (INWICIILGVLVMIIAPIGGL). Over 435–451 (AKLMNALKQPDSSCKST) the chain is Extracellular.

It belongs to the amino acid/polyamine transporter 2 family. Amino acid/auxin permease (AAAP) (TC 2.A.18.2) subfamily.

The protein localises to the cell membrane. Amino acid transporter. This chain is Lysine histidine transporter-like 3, found in Arabidopsis thaliana (Mouse-ear cress).